The sequence spans 389 residues: Chalcone synthase 1 (389 aa).

Cysteine 164 is an active-site residue.

Belongs to the thiolase-like superfamily. Chalcone/stilbene synthases family.

It catalyses the reaction (E)-4-coumaroyl-CoA + 3 malonyl-CoA + 3 H(+) = 2',4,4',6'-tetrahydroxychalcone + 3 CO2 + 4 CoA. The protein operates within secondary metabolite biosynthesis; flavonoid biosynthesis. The primary product of this enzyme is 4,2',4',6'-tetrahydroxychalcone (also termed naringenin-chalcone or chalcone) which can under specific conditions spontaneously isomerize into naringenin. This is Chalcone synthase 1 (CHS1) from Trifolium subterraneum (Subterranean clover).